A 230-amino-acid polypeptide reads, in one-letter code: MREPRPLIALDFPSFDDVKSFLAQFPPEEKLYVKIGMELYYAVGPEIVRYVKGLGHSVFLDLKLHDIPNTVKSAMKVLSDLGVDMTNVHAAGGVEMMKAAREGLGKGPKLIAVTQLTSTSEEQMHDFQNIQTSLAESVVHYAKKTAEAGLDGVVCSAHEVEAIKSATSNDFVCLTPGIRPAGSAIGDQKRIMTPADARTIGSDYIVLGRPITRAEDPIAAYQAIKAEWNG.

Residues Asp-11, Lys-34, Asp-61–Thr-70, Thr-117, Arg-179, Gln-188, Gly-208, and Arg-209 contribute to the substrate site. Lys-63 functions as the Proton donor in the catalytic mechanism.

The protein belongs to the OMP decarboxylase family. Type 1 subfamily. Homodimer.

The enzyme catalyses orotidine 5'-phosphate + H(+) = UMP + CO2. Its pathway is pyrimidine metabolism; UMP biosynthesis via de novo pathway; UMP from orotate: step 2/2. In terms of biological role, catalyzes the decarboxylation of orotidine 5'-monophosphate (OMP) to uridine 5'-monophosphate (UMP). The chain is Orotidine 5'-phosphate decarboxylase from Streptococcus mutans serotype c (strain ATCC 700610 / UA159).